Here is a 294-residue protein sequence, read N- to C-terminus: Phosphoprotein (294 aa).

Positions 12-28 (MGNEAAKAAEAFQRSLK) are binding to monomeric RNA-free nucleoprotein. Residues 52-97 (KPTISKSTKVTTPPERRNAWGEKPDTTRNQTEEARNEATLEDTSRL) are disordered. The span at 65–97 (PERRNAWGEKPDTTRNQTEEARNEATLEDTSRL) shows a compositional bias: basic and acidic residues. Position 106 is a phosphoserine (Ser-106). The tract at residues 123–128 (KKKVTF) is binding to host phosphatase PP1. A binding to protein M2-1 region spans residues 135–157 (RYTKLEMEALELLSDNEDDDAES). Ser-148, Ser-157, Ser-158, Ser-168, and Ser-171 each carry phosphoserine. The oligomerization and binding to RNA-directed RNA polymerase L stretch occupies residues 169-194 (ALSLEARLESIDEKLSMILGLLRTLN). Residues 234–294 (MKEEAKQKSK…PDDDLYSLTM (61 aa)) form a disordered region. The interval 251–279 (LTEKAKELNKIVEDESTSGESEEEEEEED) is binding to RNA-directed RNA polymerase L. Residues 253–263 (EKAKELNKIVE) show a composition bias toward basic and acidic residues. Residues 264 to 294 (DESTSGESEEEEEEEDEEESNPDDDLYSLTM) show a composition bias toward acidic residues. Positions 281-294 (EESNPDDDLYSLTM) are binding to the N-RNA complex.

This sequence belongs to the pneumoviridae phosphoprotein P family. In terms of assembly, homotetramer. Interacts with protein M2-1; the interaction between the two tetramers is required for the anti-termination and elongation transcriptional activities of protein M2-1. Interacts with host phosphatase PP1; this interaction recruits PP1 to the inclusion bodies. Formation of a complex PP1/M2-1/P allows P to target host PP1 phosphatase to the M2-1 substrate. Interacts with the nucleoprotein N; the phosphorylated phosphoprotein P binds to N-RNA complex. Interacts with the monomeric RNA-free nucleoprotein N. Interacts with RNA-directed RNA polymerase L (via N-terminus); the association of P and L forms the polymerase complex. Post-translationally, constitutively phosphorylated by host.

It is found in the virion. The protein localises to the host cytoplasm. Functionally, plays critical roles in regulating RNA replication and transcription through its interactions with multiple proteins. Tethers the RNA-directed RNA polymerase L to the nucleoprotein-RNA complex. Recruits the M2-1 protein, a processivity factor that is required for efficient transcription of viral RNA. Acts as a chaperone for neo-synthesized nucleoprotein by forming an N-P complex that preserves N in a monomeric and RNA-free state and prevents the association of nascent N with host cell RNAs. Recruits the host phosphatase PP1 to inclusion bodies to regulate viral transcription. The sequence is that of Phosphoprotein from Avian metapneumovirus (isolate Canada goose/Minnesota/15a/2001) (AMPV).